Consider the following 179-residue polypeptide: Large ribosomal subunit protein uL5 (179 aa).

The protein belongs to the universal ribosomal protein uL5 family. As to quaternary structure, part of the 50S ribosomal subunit; part of the 5S rRNA/L5/L18/L25 subcomplex. Contacts the 5S rRNA and the P site tRNA. Forms a bridge to the 30S subunit in the 70S ribosome.

This is one of the proteins that bind and probably mediate the attachment of the 5S RNA into the large ribosomal subunit, where it forms part of the central protuberance. In the 70S ribosome it contacts protein S13 of the 30S subunit (bridge B1b), connecting the 2 subunits; this bridge is implicated in subunit movement. Contacts the P site tRNA; the 5S rRNA and some of its associated proteins might help stabilize positioning of ribosome-bound tRNAs. This chain is Large ribosomal subunit protein uL5, found in Pelobacter propionicus (strain DSM 2379 / NBRC 103807 / OttBd1).